Here is a 130-residue protein sequence, read N- to C-terminus: Phosphomevalonate dehydratase small subunit (130 aa).

Residue Ser62 is the Proton acceptor of the active site.

It belongs to the AcnX type II small subunit family. In terms of assembly, heterodimer composed of a large subunit (PMDh-L) and a small subunit (PMDh-S).

The enzyme catalyses (R)-5-phosphomevalonate = (2E)-3-methyl-5-phosphooxypent-2-enoate + H2O. The protein operates within isoprenoid biosynthesis; isopentenyl diphosphate biosynthesis via mevalonate pathway. In terms of biological role, component of a hydro-lyase that catalyzes the dehydration of mevalonate 5-phosphate (MVA5P) to form trans-anhydromevalonate 5-phosphate (tAHMP). Involved in the archaeal mevalonate (MVA) pathway, which provides fundamental precursors for isoprenoid biosynthesis, such as isopentenyl diphosphate (IPP) and dimethylallyl diphosphate (DMAPP). The chain is Phosphomevalonate dehydratase small subunit from Pyrococcus abyssi (strain GE5 / Orsay).